Consider the following 1030-residue polypeptide: Halotolerance protein 9 (1030 aa).

The zn(2)-C6 fungal-type DNA-binding region spans 136 to 166 (CDHCRKRKIRCDEVDQQTKKCSNCIKFQLPC). The interval 185–208 (HHATPGESLQTSNSISNPVASSSV) is disordered. Positions 196–208 (SNSISNPVASSSV) are enriched in low complexity. Phosphoserine occurs at positions 221 and 937.

It localises to the cytoplasm. The protein localises to the nucleus. In terms of biological role, putative transcription factor involved in halotolerance. This Saccharomyces cerevisiae (strain ATCC 204508 / S288c) (Baker's yeast) protein is Halotolerance protein 9 (HAL9).